The chain runs to 141 residues: Large ribosomal subunit protein uL11 (141 aa).

Residues 1–23 (MAKQVTGQAKFQVPGGQATPAPP) form a disordered region.

Belongs to the universal ribosomal protein uL11 family. In terms of assembly, part of the ribosomal stalk of the 50S ribosomal subunit. Interacts with L10 and the large rRNA to form the base of the stalk. L10 forms an elongated spine to which L12 dimers bind in a sequential fashion forming a multimeric L10(L12)X complex. One or more lysine residues are methylated.

Functionally, forms part of the ribosomal stalk which helps the ribosome interact with GTP-bound translation factors. This Rhodopirellula baltica (strain DSM 10527 / NCIMB 13988 / SH1) protein is Large ribosomal subunit protein uL11.